Consider the following 327-residue polypeptide: 2-oxoglutarate-dependent dioxygenase traH (327 aa).

A Fe2OG dioxygenase domain is found at 183 to 290 (TTDAAMFLKL…YAVPAFWHGD (108 aa)). His211, Asp213, and His270 together coordinate Fe cation. Arg280 contributes to the 2-oxoglutarate binding site.

Belongs to the iron/ascorbate-dependent oxidoreductase family. The cofactor is Fe(2+).

It participates in secondary metabolite biosynthesis. Functionally, 2-oxoglutarate-dependent dioxygenase; part of the tra gene cluster that produces terrestric acid. The clavatol biosynthesis cluster cla and the terrestric acid cluster tra are both involved in the production of peniphenones and penilactones. The non-reducing PKS claF is responsible for the formation of clavatol from successive condensations of 3 malonyl-CoA units, presumably with a simple acetyl-CoA starter unit, and 2 methylation steps. The esterase claE probably collaborates with claF by catalyzing the hydrolysis of ACP-bound acyl intermediates to free the ACP from stalled intermediates. The clavatol oxidase claD then converts clavatol to hydroxyclavatol. Spontaneous dehydration of hydroxyclavatol leads to the accumulation of the highly active ortho-quinone methide. On the other hand, the PKS-NRPS hybrid traA is involved in the formation of crustosic acid, with the help of traB and traD. The polyketide synthase module (PKS) of traA is responsible for the synthesis of the polyketide backbone via the condensation of an acetyl-CoA starter unit with 3 malonyl-CoA units. The downstream nonribosomal peptide synthetase (NRPS) module then amidates the carboxyl end of the polyketide with L-malic acid. Because traA lacks a designated enoylreductase (ER) domain, the required activity is provided the enoyl reductase traG. Crustosic acid undergoes decarboxylation and isomerization to the terrestric acid, catalyzed by the 2-oxoglutarate-dependent dioxygenase traH. Both acids are further converted to the 2 gamma-butyrolactones (R)-5-methyltetronic acid and (S)-5-carboxylmethyltetronic acid, with involvement of the cytochrome P450 monooxygenase claJ. Spontaneous addition of the methide to these gamma-butyrolactones leads to peniphenone D and penilactone D, which undergo again stereospecific attacking by methide to give penilactones A and B. The polypeptide is 2-oxoglutarate-dependent dioxygenase traH (Penicillium crustosum (Blue mold fungus)).